The sequence spans 148 residues: Large ribosomal subunit protein bL9 (148 aa).

The protein belongs to the bacterial ribosomal protein bL9 family.

Functionally, binds to the 23S rRNA. The sequence is that of Large ribosomal subunit protein bL9 from Parafrankia sp. (strain EAN1pec).